Here is a 358-residue protein sequence, read N- to C-terminus: uncharacterized protein (358 aa).

The first 15 residues, 1 to 15 (MITGKTISLPLSVIA), serve as a signal peptide directing secretion. Cys-16 carries N-palmitoyl cysteine lipidation. Cys-16 is lipidated: S-diacylglycerol cysteine. The segment at 331–358 (PCGTGSPGNPPPNINSVAQHRISTNTNR) is disordered. Residues 347–358 (VAQHRISTNTNR) are compositionally biased toward polar residues.

It localises to the cell membrane. This is an uncharacterized protein from Sinorhizobium fredii (strain NBRC 101917 / NGR234).